Reading from the N-terminus, the 98-residue chain is uncharacterized protein (98 aa).

Helical transmembrane passes span 14–34 and 41–61; these read FLVI…PVTA and MTGA…ASII.

It is found in the cell membrane. This is an uncharacterized protein from Haemophilus influenzae (strain ATCC 51907 / DSM 11121 / KW20 / Rd).